The chain runs to 428 residues: Dihydroorotase (428 aa).

Residues H60 and H62 each coordinate Zn(2+). Residues H62–R64 and N94 each bind substrate. 3 residues coordinate Zn(2+): D152, H179, and H232. Substrate is bound at residue N278. Residue D305 participates in Zn(2+) binding. D305 is an active-site residue. Substrate contacts are provided by residues H309 and F323–G324.

This sequence belongs to the metallo-dependent hydrolases superfamily. DHOase family. Class I DHOase subfamily. It depends on Zn(2+) as a cofactor.

The catalysed reaction is (S)-dihydroorotate + H2O = N-carbamoyl-L-aspartate + H(+). It participates in pyrimidine metabolism; UMP biosynthesis via de novo pathway; (S)-dihydroorotate from bicarbonate: step 3/3. Its function is as follows. Catalyzes the reversible cyclization of carbamoyl aspartate to dihydroorotate. The protein is Dihydroorotase of Anoxybacillus flavithermus (strain DSM 21510 / WK1).